The following is an 826-amino-acid chain: Ribosome-releasing factor 2, mitochondrial (826 aa).

The N-terminal 44 residues, 1–44 (MIVRNLLGKNRLCCLQPKLLLSTLSQRPQLQLSLQLLCRATRLY), are a transit peptide targeting the mitochondrion. One can recognise a tr-type G domain in the interval 53-340 (PKTRNIGIIA…GITNYLPSPL (288 aa)). Residues 62–69 (AHIDAGKT), 126–130 (DTPGH), and 180–183 (NKMD) each bind GTP.

The protein belongs to the TRAFAC class translation factor GTPase superfamily. Classic translation factor GTPase family. EF-G/EF-2 subfamily.

It localises to the mitochondrion. In terms of biological role, mitochondrial GTPase that mediates the disassembly of ribosomes from messenger RNA at the termination of mitochondrial protein biosynthesis. Not involved in the GTP-dependent ribosomal translocation step during translation elongation. The sequence is that of Ribosome-releasing factor 2, mitochondrial from Lodderomyces elongisporus (strain ATCC 11503 / CBS 2605 / JCM 1781 / NBRC 1676 / NRRL YB-4239) (Yeast).